A 287-amino-acid polypeptide reads, in one-letter code: IQ domain-containing protein K (287 aa).

This chain is IQ domain-containing protein K (IQCK), found in Homo sapiens (Human).